A 246-amino-acid chain; its full sequence is MKLIIGVITLFPQMFDALKSGVIGRALKQDRLTLSFWNPRDYATDPHRTVDDRPYGGGPGMVMKFEPLALALKAAKAQLGENTKVIHLTPQGKLLTQAIVREKIHASPLILLAGRYEGIDERLIEAEVDEEWSIGDYILSGGELPAMVLIDAMTRLLPGVLGHKDSASQDSFTAGLLDYSHYTRPEKIADRPVPSVLLSGDHEAISRWRLKQSLGRTWQRRQDLIKRRSLSENEQRLLDEFFEESS.

Residues glycine 114 and 134 to 139 (IGDYIL) contribute to the S-adenosyl-L-methionine site.

Belongs to the RNA methyltransferase TrmD family. In terms of assembly, homodimer.

Its subcellular location is the cytoplasm. It catalyses the reaction guanosine(37) in tRNA + S-adenosyl-L-methionine = N(1)-methylguanosine(37) in tRNA + S-adenosyl-L-homocysteine + H(+). Functionally, specifically methylates guanosine-37 in various tRNAs. The chain is tRNA (guanine-N(1)-)-methyltransferase from Coxiella burnetii (strain CbuG_Q212) (Coxiella burnetii (strain Q212)).